Here is a 107-residue protein sequence, read N- to C-terminus: Metallothionein-1 (107 aa).

The propeptide occupies methionine 1–aspartate 2.

Belongs to the metallothionein superfamily. Type 7 family.

In terms of biological role, the metallothioneins are involved in the cellular sequestration of toxic metal ions. Binds 12 cadmium ions per molecule. The protein is Metallothionein-1 of Tetrahymena pyriformis.